Here is a 50-residue protein sequence, read N- to C-terminus: Large ribosomal subunit protein bL33B (50 aa).

This sequence belongs to the bacterial ribosomal protein bL33 family.

The sequence is that of Large ribosomal subunit protein bL33B from Ligilactobacillus salivarius (strain UCC118) (Lactobacillus salivarius).